Reading from the N-terminus, the 249-residue chain is NADH dehydrogenase [ubiquinone] flavoprotein 2, mitochondrial (249 aa).

The transit peptide at 1 to 32 (MFFSAALRARAAGLTAQWGRHVRNLHKTAMQN) directs the protein to the mitochondrion. Lysine 61 bears the N6-acetyllysine mark. The [2Fe-2S] cluster site is built by cysteine 135, cysteine 140, cysteine 176, and cysteine 180. Tyrosine 193 carries the post-translational modification Phosphotyrosine; by SRC. Positions 213 to 249 (IPKPGPRSGRFSCEPAGGLTSLTEPPKGPGFGVQAGL) are disordered.

The protein belongs to the complex I 24 kDa subunit family. As to quaternary structure, core subunit of respiratory chain NADH dehydrogenase (Complex I) which is composed of 45 different subunits. This is a component of the flavoprotein-sulfur (FP) fragment of the enzyme. Requires [2Fe-2S] cluster as cofactor.

It is found in the mitochondrion inner membrane. It carries out the reaction a ubiquinone + NADH + 5 H(+)(in) = a ubiquinol + NAD(+) + 4 H(+)(out). Functionally, core subunit of the mitochondrial membrane respiratory chain NADH dehydrogenase (Complex I) which catalyzes electron transfer from NADH through the respiratory chain, using ubiquinone as an electron acceptor. Parts of the peripheral arm of the enzyme, where the electrons from NADH are accepted by flavin mononucleotide (FMN) and then passed along a chain of iron-sulfur clusters by electron tunnelling to the final acceptor ubiquinone. Contains one iron-sulfur cluster. In Gorilla gorilla gorilla (Western lowland gorilla), this protein is NADH dehydrogenase [ubiquinone] flavoprotein 2, mitochondrial.